The chain runs to 108 residues: MFFQTTIVAALASLAVATPLALRTDSRCNTESVKCCNKSEDAETFKKSASAALIPIKIGDITGEVYSECSPIVGLIGGSSCSAQTVCCDNAKFNGLVNIGCTPINVAL.

An N-terminal signal peptide occupies residues 1–17 (MFFQTTIVAALASLAVA). 4 disulfide bridges follow: C28–C87, C35–C81, C36–C69, and C88–C101. Residue N37 is glycosylated (N-linked (GlcNAc...) asparagine).

This sequence belongs to the fungal hydrophobin family. Self-assembles to form functional amyloid fibrils called rodlets. Self-assembly into fibrillar rodlets occurs spontaneously at hydrophobic:hydrophilic interfaces and the rodlets further associate laterally to form amphipathic monolayers.

It is found in the secreted. Its subcellular location is the cell wall. Its function is as follows. Aerial growth, conidiation, and dispersal of filamentous fungi in the environment rely upon a capability of their secreting small amphipathic proteins called hydrophobins (HPBs) with low sequence identity. Class I can self-assemble into an outermost layer of rodlet bundles on aerial cell surfaces, conferring cellular hydrophobicity that supports fungal growth, development and dispersal; whereas Class II form highly ordered films at water-air interfaces through intermolecular interactions but contribute nothing to the rodlet structure. Vmh3 is a class I hydrophobin that is essential for the maintenance of the surface hydrophobicity of the mycelium and might be involved in the development of fruiting bodies. Plays an important role in hyphal resistance against environmental stress. Necessary for the efficient biodegradation of lignin. The chain is Class I hydrophobin 3 from Pleurotus ostreatus (strain PC15) (Oyster mushroom).